Consider the following 1067-residue polypeptide: SURP and G-patch domain-containing protein 2 (1067 aa).

Ser-93 bears the Phosphoserine mark. Basic and acidic residues predominate over residues Lys-177–Glu-189. The interval Lys-177–Gln-199 is disordered. Phosphoserine is present on Ser-206. Residue Lys-219 forms a Glycyl lysine isopeptide (Lys-Gly) (interchain with G-Cter in SUMO2) linkage. The residue at position 265 (Thr-265) is a Phosphothreonine. Phosphoserine is present on residues Ser-267 and Ser-586. The SURP motif 1 repeat unit spans residues Ile-573–Lys-616. A disordered region spans residues Ser-668–Thr-767. Residues Thr-680–Thr-691 are compositionally biased toward polar residues. Ser-740 carries the post-translational modification Phosphoserine. At Thr-744 the chain carries Phosphothreonine. The SURP motif 2 repeat unit spans residues Thr-770–Tyr-813. Residues Ser-825–Thr-840 are compositionally biased toward polar residues. 2 disordered regions span residues Ser-825–Lys-944 and Arg-967–Gln-991. Ser-838 carries the phosphoserine modification. A compositionally biased stretch (basic and acidic residues) spans Lys-843–Gln-856. The span at Leu-866–Glu-883 shows a compositional bias: acidic residues. Polar residues predominate over residues Ala-919–Ser-931. Residues Gly-975 to Pro-984 are compositionally biased toward basic residues. The short motif at Lys-980–Lys-985 is the Nuclear localization signal element. Residues Asp-996–Pro-1042 form the G-patch domain.

It is found in the nucleus. Its function is as follows. May play a role in mRNA splicing. The sequence is that of SURP and G-patch domain-containing protein 2 (Sugp2) from Mus musculus (Mouse).